Here is a 335-residue protein sequence, read N- to C-terminus: MAQVRALHKIMALFSANSIGAMNNSDTRIAGCFLTGIPGLEQLHIWLSIPFCIMYITALEGNGILICVILSQAILHEPMYIFLSMLASADVLLSTTTMPKALANLWLGYSLISFDGCLTQMFFIHFLFIHSAVLLAMAFDRYVAICSPLRYVTILTSKVIGKIVTAALSHSFIIMFPSIFLLEHLHYCQINIIAHTFCEHMGIAHLSCSDISINVWYGLAAALLSTGLDIMLITVSYIHILQAVFRLLSQDARSKALSTCGSHICVILLFYVPALFSVFAYRFGGRSVPCYVHILLASLYVVIPPMLNPVIYGVRTKPILEGAKQMFSNLAKGSK.

Residues 1-45 (MAQVRALHKIMALFSANSIGAMNNSDTRIAGCFLTGIPGLEQLHI) are Extracellular-facing. Asn23 carries N-linked (GlcNAc...) asparagine glycosylation. The chain crosses the membrane as a helical span at residues 46–66 (WLSIPFCIMYITALEGNGILI). Residues 67-74 (CVILSQAI) are Cytoplasmic-facing. A helical transmembrane segment spans residues 75 to 95 (LHEPMYIFLSMLASADVLLST). The Extracellular portion of the chain corresponds to 96–119 (TTMPKALANLWLGYSLISFDGCLT). An intrachain disulfide couples Cys117 to Cys208. The helical transmembrane segment at 120–139 (QMFFIHFLFIHSAVLLAMAF) threads the bilayer. At 140–158 (DRYVAICSPLRYVTILTSK) the chain is on the cytoplasmic side. The helical transmembrane segment at 159–179 (VIGKIVTAALSHSFIIMFPSI) threads the bilayer. The Extracellular portion of the chain corresponds to 180-215 (FLLEHLHYCQINIIAHTFCEHMGIAHLSCSDISINV). A helical transmembrane segment spans residues 216 to 236 (WYGLAAALLSTGLDIMLITVS). The Cytoplasmic portion of the chain corresponds to 237–256 (YIHILQAVFRLLSQDARSKA). A helical membrane pass occupies residues 257 to 277 (LSTCGSHICVILLFYVPALFS). The Extracellular segment spans residues 278-293 (VFAYRFGGRSVPCYVH). A helical membrane pass occupies residues 294–314 (ILLASLYVVIPPMLNPVIYGV). The Cytoplasmic portion of the chain corresponds to 315-335 (RTKPILEGAKQMFSNLAKGSK).

The protein belongs to the G-protein coupled receptor 1 family.

Its subcellular location is the cell membrane. In terms of biological role, odorant receptor. This Homo sapiens (Human) protein is Olfactory receptor 52B6 (OR52B6).